The following is a 769-amino-acid chain: Signal transducer and activator of transcription 3.1 (769 aa).

The short motif at 150-162 (DVRKKVQDLEQKM) is the Essential for nuclear import element. Residues 580 to 670 (WNEGYIMGFI…DATNILVSPL (91 aa)) enclose the SH2 domain. Ser-728 bears the Phosphoserine; by NLK mark.

This sequence belongs to the transcription factor STAT family. As to quaternary structure, forms a homodimer or a heterodimer with a related family member, such as stat1. Interacts with nlk.2. Phosphorylation of both tyrosine and serine residues, together with dimerization, is required for mesoderm induction.

It localises to the cytoplasm. It is found in the nucleus. Functionally, transcription factor that binds to target promoter sequences and activates transcription upon il6st/gp130 stimulation. Mediates ventralization of embryos, at least in part via inhibition of smad2 signaling. Required for hairy2 to induce dll1/delta1 and promote neural crest cell proliferation and differentiation. Involved in TGFbeta-mediated mesoderm induction in early embryos, acting downstream of map3k7/tak1 and nlk.2. The chain is Signal transducer and activator of transcription 3.1 (stat3.1) from Xenopus laevis (African clawed frog).